The following is a 355-amino-acid chain: Peptide chain release factor 1 (355 aa).

Gln233 is modified (N5-methylglutamine). Residues 283 to 293 (EKNKDRADARK) show a composition bias toward basic and acidic residues. A disordered region spans residues 283-304 (EKNKDRADARKSQVGTGDRSER).

This sequence belongs to the prokaryotic/mitochondrial release factor family. In terms of processing, methylated by PrmC. Methylation increases the termination efficiency of RF1.

It is found in the cytoplasm. Functionally, peptide chain release factor 1 directs the termination of translation in response to the peptide chain termination codons UAG and UAA. The sequence is that of Peptide chain release factor 1 from Finegoldia magna (strain ATCC 29328 / DSM 20472 / WAL 2508) (Peptostreptococcus magnus).